The following is an 817-amino-acid chain: LisH domain-containing protein ARMC9 (817 aa).

The LisH domain occupies histidine 7 to glycine 39. A coiled-coil region spans residues glycine 204–lysine 230. At serine 583 the chain carries Phosphoserine. 2 disordered regions span residues arginine 637–glycine 659 and cysteine 761–lysine 817. A compositionally biased stretch (polar residues) spans valine 765–glutamine 774. Residues proline 793–arginine 807 show a composition bias toward low complexity. Residues glycine 808–lysine 817 show a composition bias toward polar residues.

In terms of assembly, interacts with TOGARAM1, CCDC66, CEP104, CSPP1 and CEP290. Interacts with NDUFAF2.

Its subcellular location is the cytoplasm. The protein localises to the cytoskeleton. It is found in the cilium basal body. It localises to the cell projection. The protein resides in the cilium. Its subcellular location is the microtubule organizing center. The protein localises to the centrosome. It is found in the centriole. Involved in ciliogenesis. It is required for appropriate acetylation and polyglutamylation of ciliary microtubules, and regulation of cilium length. Acts as a positive regulator of hedgehog (Hh) signaling. May participate in the trafficking and/or retention of GLI2 and GLI3 proteins at the ciliary tip. The chain is LisH domain-containing protein ARMC9 from Mus musculus (Mouse).